A 1008-amino-acid chain; its full sequence is PWWP domain-containing protein 3 (1008 aa).

Residues 78–122 are a coiled coil; sequence VSSLLKLKEDVEEEEEEEEEEEEEEEDGEDEEEEEEEEEEEEEEE. The segment at 84-124 is disordered; the sequence is LKEDVEEEEEEEEEEEEEEEDGEDEEEEEEEEEEEEEEEHG. The span at 87–122 shows a compositional bias: acidic residues; that stretch reads DVEEEEEEEEEEEEEEEDGEDEEEEEEEEEEEEEEE. The PWWP domain maps to 127 to 188; sequence VGDFVWGKIK…ASQLKPFAES (62 aa). Disordered regions lie at residues 307–339, 399–606, and 668–874; these read EYHEPQSVPGLEDKNNDDDDDDEEKNVNDGLQW, ETEP…LGQE, and NHKF…GPGS. Positions 321-330 are enriched in acidic residues; that stretch reads NNDDDDDDEE. Basic and acidic residues predominate over residues 399-409; that stretch reads ETEPADGDVKS. The span at 473–490 shows a compositional bias: acidic residues; it reads DDGDDDGSGDKEESEEKE. Composition is skewed to basic and acidic residues over residues 511–522, 677–687, and 707–725; these read RFDDSVVERSTE, SSDKEKEELSE, and QKAEEIEVTGKEENETDKH. Positions 726-738 are enriched in basic residues; that stretch reads GKMKKERKRKKSE. 3 stretches are compositionally biased toward basic and acidic residues: residues 739–758, 768–787, and 794–818; these read SKKEGGEGEETQKEANESTK, SKKQSDGEEETQKEPSESTK, and NPESKKKAEAVEEEETRKESVESTK. 3 consecutive short sequence motifs (nuclear localization signal) follow at residues 786 to 793, 809 to 816, and 841 to 848; these read TKKERKRK, TRKESVES, and EKKKKKKR. Residues 804-824 are a coiled coil; that stretch reads VEEEETRKESVESTKKERKRK. Basic residues predominate over residues 842–854; that stretch reads KKKKKKREGKSKK.

This sequence belongs to the PDP family. As to quaternary structure, interacts with DEK3. Binds to LHP1, MSI4/FVE and MSI5. Component of the PRC2 (polycomb repressive complex 2) complex which regulates histone methylation on histone H3K27.

It localises to the nucleus. In terms of biological role, together with PDP1, PDP2 and PDP6, interacts with MSI4/FVE and MSI5 to suppress FLC, MAF4 and MAF5 expression by regulating the function of the PRC2 complex and modulating H3K27me3 level, thereby promoting flowering. In Arabidopsis thaliana (Mouse-ear cress), this protein is PWWP domain-containing protein 3.